A 259-amino-acid polypeptide reads, in one-letter code: Pyrroloquinoline-quinone synthase (259 aa).

Belongs to the PqqC family.

It catalyses the reaction 6-(2-amino-2-carboxyethyl)-7,8-dioxo-1,2,3,4,7,8-hexahydroquinoline-2,4-dicarboxylate + 3 O2 = pyrroloquinoline quinone + 2 H2O2 + 2 H2O + H(+). It participates in cofactor biosynthesis; pyrroloquinoline quinone biosynthesis. In terms of biological role, ring cyclization and eight-electron oxidation of 3a-(2-amino-2-carboxyethyl)-4,5-dioxo-4,5,6,7,8,9-hexahydroquinoline-7,9-dicarboxylic-acid to PQQ. The chain is Pyrroloquinoline-quinone synthase from Bradyrhizobium sp. (strain ORS 278).